A 335-amino-acid polypeptide reads, in one-letter code: uncharacterized protein (335 aa).

Residue 28–35 (GPINSGKT) participates in ATP binding.

Belongs to the archaeal ATPase family.

This is an uncharacterized protein from Pyrococcus abyssi (strain GE5 / Orsay).